A 50-amino-acid polypeptide reads, in one-letter code: Large ribosomal subunit protein bL33 (50 aa).

This sequence belongs to the bacterial ribosomal protein bL33 family.

This chain is Large ribosomal subunit protein bL33, found in Hydrogenovibrio crunogenus (strain DSM 25203 / XCL-2) (Thiomicrospira crunogena).